The sequence spans 347 residues: Autoinducer 2 import system permease protein LsrC (347 aa).

The next 9 helical transmembrane spans lie at 14 to 34 (LLAIVCLFVFPGALDSQYLSV), 39 to 59 (MVFSSAQILMLLAIGATMVML), 72 to 92 (GMCAVLLGVMLNAGYSLPVAC), 93 to 113 (LATLILGIVAGFFNGVLVAWL), 115 to 135 (IPAIVATLGTLGLYRGIMLLW), 155 to 175 (VFLGISAIGWFTLVLALLMAW), 213 to 233 (LNGGMAALAGIVFTSQIGFIP), 249 to 269 (VLGGISLLGGSGTVIGAILGA), and 284 to 304 (IPAWWNDFIAGLVLLGVLVFD).

Belongs to the binding-protein-dependent transport system permease family. AraH/RbsC subfamily. In terms of assembly, the complex is composed of two ATP-binding proteins (LsrA), two transmembrane proteins (LsrC and LsrD) and a solute-binding protein (LsrB).

The protein resides in the cell inner membrane. Part of the ABC transporter complex LsrABCD involved in autoinducer 2 (AI-2) import. Probably responsible for the translocation of the substrate across the membrane. In Salmonella choleraesuis (strain SC-B67), this protein is Autoinducer 2 import system permease protein LsrC (lsrC).